The sequence spans 178 residues: Probable DNA-directed RNA polymerase subunit delta (178 aa).

The region spanning 14–81 is the HTH HARE-type domain; it reads LSMIEVAHAI…GENTWGLRTW (68 aa). Residues 120-143 show a composition bias toward acidic residues; it reads DDDVIDYDSDDPEDEEVEAEDTTS. The segment at 120–178 is disordered; the sequence is DDDVIDYDSDDPEDEEVEAEDTTSDDAPAFEDLSNDDDTDVLPDGIEGQLSELNEDDEN.

This sequence belongs to the RpoE family. In terms of assembly, RNAP is composed of a core of 2 alpha, a beta and a beta' subunits. The core is associated with a delta subunit and one of several sigma factors.

Participates in both the initiation and recycling phases of transcription. In the presence of the delta subunit, RNAP displays an increased specificity of transcription, a decreased affinity for nucleic acids, and an increased efficiency of RNA synthesis because of enhanced recycling. The sequence is that of Probable DNA-directed RNA polymerase subunit delta from Pediococcus pentosaceus (strain ATCC 25745 / CCUG 21536 / LMG 10740 / 183-1w).